Reading from the N-terminus, the 124-residue chain is Small ribosomal subunit protein uS12 (124 aa).

The residue at position 89 (Asp-89) is a 3-methylthioaspartic acid.

The protein belongs to the universal ribosomal protein uS12 family. Part of the 30S ribosomal subunit. Contacts proteins S8 and S17. May interact with IF1 in the 30S initiation complex.

With S4 and S5 plays an important role in translational accuracy. Its function is as follows. Interacts with and stabilizes bases of the 16S rRNA that are involved in tRNA selection in the A site and with the mRNA backbone. Located at the interface of the 30S and 50S subunits, it traverses the body of the 30S subunit contacting proteins on the other side and probably holding the rRNA structure together. The combined cluster of proteins S8, S12 and S17 appears to hold together the shoulder and platform of the 30S subunit. This chain is Small ribosomal subunit protein uS12, found in Psychrobacter arcticus (strain DSM 17307 / VKM B-2377 / 273-4).